The following is a 446-amino-acid chain: Amino-acid acetyltransferase (446 aa).

An N-acetyltransferase domain is found at 299–431 (EQVRDAEIDD…SHLPMKKQKL (133 aa)).

Belongs to the acetyltransferase family. ArgA subfamily.

It localises to the cytoplasm. It catalyses the reaction L-glutamate + acetyl-CoA = N-acetyl-L-glutamate + CoA + H(+). The protein operates within amino-acid biosynthesis; L-arginine biosynthesis; N(2)-acetyl-L-ornithine from L-glutamate: step 1/4. The chain is Amino-acid acetyltransferase from Aliivibrio fischeri (strain MJ11) (Vibrio fischeri).